The following is a 377-amino-acid chain: Guanine nucleotide-binding protein subunit beta (377 aa).

WD repeat units lie at residues 63 to 93 (GHTG…IVWN), 105 to 135 (LPCA…SIFN), 154 to 185 (GHKG…VLWD), 202 to 233 (GHTA…RLWD), 246 to 276 (CHEG…RLFD), 293 to 323 (GDIP…YVWD), and 339 to 369 (SHEG…KIWA).

It belongs to the WD repeat G protein beta family. As to quaternary structure, g proteins are composed of 3 units, alpha, beta and gamma.

The protein resides in the cell membrane. The protein localises to the endoplasmic reticulum membrane. Its function is as follows. Guanine nucleotide-binding proteins (G proteins) are involved as a modulator or transducer in various transmembrane signaling systems. The beta and gamma chains are required for the GTPase activity, for replacement of GDP by GTP, and for G protein-effector interaction. The sequence is that of Guanine nucleotide-binding protein subunit beta from Nicotiana plumbaginifolia (Leadwort-leaved tobacco).